The sequence spans 280 residues: Maltodextrin transport system permease protein MalD (280 aa).

Helical transmembrane passes span 15–35 (LTYL…LITI), 77–97 (LIIA…AGYA), 110–130 (LVFF…AFFV), 142–162 (WFLI…LMKG), 200–220 (VQAL…SFLL), and 244–264 (IAYF…LFFF). The ABC transmembrane type-1 domain occupies 73 to 265 (YLNTLIIALI…LPICILFFFL (193 aa)).

The protein belongs to the binding-protein-dependent transport system permease family. MalFG subfamily.

It localises to the cell membrane. Functionally, part of the binding-protein-dependent transport system for maltodextrin; probably responsible for the translocation of the substrate across the membrane. This is Maltodextrin transport system permease protein MalD (malD) from Streptococcus pneumoniae (strain ATCC BAA-255 / R6).